The chain runs to 268 residues: Serine/arginine-rich splicing factor SR30 (268 aa).

RRM domains follow at residues 7-82 (RTIY…IAHG) and 109-187 (YRVL…EYES). A compositionally biased stretch (basic and acidic residues) spans 186–199 (ESRSVSRSPDDSKS). Residues 186-268 (ESRSVSRSPD…NSPVSPVISG (83 aa)) form a disordered region. 11 positions are modified to phosphoserine: S193, S210, S212, S214, S219, S221, S227, S236, S246, S256, and S260. Residues 207 to 247 (RGPSCSYSSKSRSVSPARSISPRSRPLSRSRSLYSSVSRSQ) are compositionally biased toward low complexity. Low complexity predominate over residues 257-268 (RSNSPVSPVISG).

The protein belongs to the splicing factor SR family. SR subfamily. Component of the spliceosome. Interacts with SNRNP35, CYP59 and CYP63. In terms of processing, phosphorylated. Ubiquitous.

Its subcellular location is the nucleus speckle. It is found in the nucleus. It localises to the nucleoplasm. The protein resides in the cytoplasm. Functionally, regulatory splicing factor that modulates alternative splicing and gene expression in specific cell types. Autoregulates its own expression. Probably involved in intron recognition and spliceosome assembly. The sequence is that of Serine/arginine-rich splicing factor SR30 (SR30) from Arabidopsis thaliana (Mouse-ear cress).